Here is a 47-residue protein sequence, read N- to C-terminus: Ribosome-inactivating protein luffin P1 (47 aa).

Disulfide bonds link cysteine 12–cysteine 33 and cysteine 16–cysteine 29.

As to quaternary structure, homotetramer.

The enzyme catalyses Endohydrolysis of the N-glycosidic bond at one specific adenosine on the 28S rRNA.. In terms of biological role, inhibits protein synthesis in animal cells. The polypeptide is Ribosome-inactivating protein luffin P1 (Luffa aegyptiaca (Sponge gourd)).